We begin with the raw amino-acid sequence, 227 residues long: PKHD-type hydroxylase ABSDF3031 (227 aa).

One can recognise a Fe2OG dioxygenase domain in the interval 78–178; the sequence is KIIPPLFNRY…RFASFFWVQS (101 aa). Fe cation-binding residues include H96, D98, and H159. R169 contributes to the 2-oxoglutarate binding site.

Fe(2+) serves as cofactor. Requires L-ascorbate as cofactor.

The protein is PKHD-type hydroxylase ABSDF3031 of Acinetobacter baumannii (strain SDF).